The sequence spans 324 residues: Sex-lethal homolog (324 aa).

RRM domains lie at 102 to 180 (TNLI…YARP) and 188 to 268 (TNLY…LAEE).

Expressed in somatic cells of both sexes throughout development, but not in the pole cells which are the progenitors of the germline.

It localises to the nucleus. Unknown; apparently not involved in somatic sex determination. The chain is Sex-lethal homolog (SXL) from Musca domestica (House fly).